Reading from the N-terminus, the 61-residue chain is Small ribosomal subunit protein uS14 (61 aa).

Residues cysteine 24, cysteine 27, cysteine 40, and cysteine 43 each contribute to the Zn(2+) site.

Belongs to the universal ribosomal protein uS14 family. Zinc-binding uS14 subfamily. Part of the 30S ribosomal subunit. Contacts proteins S3 and S10. Zn(2+) serves as cofactor.

In terms of biological role, binds 16S rRNA, required for the assembly of 30S particles and may also be responsible for determining the conformation of the 16S rRNA at the A site. The chain is Small ribosomal subunit protein uS14 from Campylobacter lari (strain RM2100 / D67 / ATCC BAA-1060).